A 67-amino-acid polypeptide reads, in one-letter code: ATP synthase F(0) complex subunit 8 (67 aa).

The chain crosses the membrane as a helical span at residues Thr8 to Met24. Lys54 bears the N6-acetyllysine; alternate mark. Lys54 carries the post-translational modification N6-succinyllysine; alternate. Lys57 is modified (N6-acetyllysine).

It belongs to the ATPase protein 8 family. In terms of assembly, component of the ATP synthase complex composed at least of ATP5F1A/subunit alpha, ATP5F1B/subunit beta, ATP5MC1/subunit c (homooctomer), MT-ATP6/subunit a, MT-ATP8/subunit 8, ATP5ME/subunit e, ATP5MF/subunit f, ATP5MG/subunit g, ATP5MK/subunit k, ATP5MJ/subunit j, ATP5F1C/subunit gamma, ATP5F1D/subunit delta, ATP5F1E/subunit epsilon, ATP5PF/subunit F6, ATP5PB/subunit b, ATP5PD/subunit d, ATP5PO/subunit OSCP. ATP synthase complex consists of a soluble F(1) head domain (subunits alpha(3) and beta(3)) - the catalytic core - and a membrane F(0) domain - the membrane proton channel (subunits c, a, 8, e, f, g, k and j). These two domains are linked by a central stalk (subunits gamma, delta, and epsilon) rotating inside the F1 region and a stationary peripheral stalk (subunits F6, b, d, and OSCP). Interacts with PRICKLE3.

It is found in the mitochondrion membrane. Subunit 8, of the mitochondrial membrane ATP synthase complex (F(1)F(0) ATP synthase or Complex V) that produces ATP from ADP in the presence of a proton gradient across the membrane which is generated by electron transport complexes of the respiratory chain. ATP synthase complex consist of a soluble F(1) head domain - the catalytic core - and a membrane F(1) domain - the membrane proton channel. These two domains are linked by a central stalk rotating inside the F(1) region and a stationary peripheral stalk. During catalysis, ATP synthesis in the catalytic domain of F(1) is coupled via a rotary mechanism of the central stalk subunits to proton translocation. In vivo, can only synthesize ATP although its ATP hydrolase activity can be activated artificially in vitro. Part of the complex F(0) domain. The polypeptide is ATP synthase F(0) complex subunit 8 (Oryctolagus cuniculus (Rabbit)).